The chain runs to 330 residues: tRNA (cytosine(38)-C(5))-methyltransferase (330 aa).

The 324-residue stretch at leucine 7–phenylalanine 330 folds into the SAM-dependent MTase C5-type domain. Cysteine 81 is a catalytic residue.

Belongs to the class I-like SAM-binding methyltransferase superfamily. C5-methyltransferase family.

The protein resides in the cytoplasm. It localises to the nucleus. It catalyses the reaction cytidine(38) in tRNA + S-adenosyl-L-methionine = 5-methylcytidine(38) in tRNA + S-adenosyl-L-homocysteine + H(+). In terms of biological role, specifically methylates cytosine 38 in the anticodon loop of tRNA(Asp). Can also methylate cytosine 38 in tRNA(Glu), albeit to a lower level, but not tRNA(Lys). Pmt1-dependent tRNA methylation is induced by nitrogen limitation and depends on the nutrient-sensing protein kinase sck2. Does not have DNA-methylation activity. This chain is tRNA (cytosine(38)-C(5))-methyltransferase (pmt1), found in Schizosaccharomyces pombe (strain 972 / ATCC 24843) (Fission yeast).